Consider the following 247-residue polypeptide: Uridylate kinase (247 aa).

An ATP-binding site is contributed by 15-18 (KLSG). The tract at residues 23–28 (GEEGFG) is involved in allosteric activation by GTP. Glycine 57 contributes to the UMP binding site. Positions 58 and 62 each coordinate ATP. UMP-binding positions include aspartate 77 and 138–145 (TGNPFCTT). Residues threonine 165, tyrosine 171, and aspartate 174 each coordinate ATP.

The protein belongs to the UMP kinase family. Homohexamer.

The protein localises to the cytoplasm. The catalysed reaction is UMP + ATP = UDP + ADP. It functions in the pathway pyrimidine metabolism; CTP biosynthesis via de novo pathway; UDP from UMP (UMPK route): step 1/1. With respect to regulation, allosterically activated by GTP. Inhibited by UTP. In terms of biological role, catalyzes the reversible phosphorylation of UMP to UDP. The chain is Uridylate kinase from Shewanella loihica (strain ATCC BAA-1088 / PV-4).